The following is a 29-amino-acid chain: Cytochrome c oxidase subunit 7A2, mitochondrial (29 aa).

An N6-acetyllysine modification is found at lysine 10.

The protein belongs to the cytochrome c oxidase VIIa family. As to quaternary structure, component of the cytochrome c oxidase (complex IV, CIV), a multisubunit enzyme composed of 14 subunits. The complex is composed of a catalytic core of 3 subunits MT-CO1, MT-CO2 and MT-CO3, encoded in the mitochondrial DNA, and 11 supernumerary subunits COX4I, COX5A, COX5B, COX6A, COX6B, COX6C, COX7A, COX7B, COX7C, COX8 and NDUFA4, which are encoded in the nuclear genome. The complex exists as a monomer or a dimer and forms supercomplexes (SCs) in the inner mitochondrial membrane with NADH-ubiquinone oxidoreductase (complex I, CI) and ubiquinol-cytochrome c oxidoreductase (cytochrome b-c1 complex, complex III, CIII), resulting in different assemblies (supercomplex SCI(1)III(2)IV(1) and megacomplex MCI(2)III(2)IV(2)). Interacts with PET100.

The protein localises to the mitochondrion inner membrane. The protein operates within energy metabolism; oxidative phosphorylation. Component of the cytochrome c oxidase, the last enzyme in the mitochondrial electron transport chain which drives oxidative phosphorylation. The respiratory chain contains 3 multisubunit complexes succinate dehydrogenase (complex II, CII), ubiquinol-cytochrome c oxidoreductase (cytochrome b-c1 complex, complex III, CIII) and cytochrome c oxidase (complex IV, CIV), that cooperate to transfer electrons derived from NADH and succinate to molecular oxygen, creating an electrochemical gradient over the inner membrane that drives transmembrane transport and the ATP synthase. Cytochrome c oxidase is the component of the respiratory chain that catalyzes the reduction of oxygen to water. Electrons originating from reduced cytochrome c in the intermembrane space (IMS) are transferred via the dinuclear copper A center (CU(A)) of subunit 2 and heme A of subunit 1 to the active site in subunit 1, a binuclear center (BNC) formed by heme A3 and copper B (CU(B)). The BNC reduces molecular oxygen to 2 water molecules using 4 electrons from cytochrome c in the IMS and 4 protons from the mitochondrial matrix. This chain is Cytochrome c oxidase subunit 7A2, mitochondrial (COX7A2), found in Canis lupus familiaris (Dog).